Reading from the N-terminus, the 366-residue chain is MRVTAPRTLLLLLSGGLALTETWAGSHSLRYFDTAVSRPGRREPRFISVGYVDDTQFVRFDSDAASPRGEPRAPWVEQEGPEYWDRETQKYKRQAQADRVSLRNLRGYYNQSEDGSHTLQWMYGCDLGPDGRLLRGYGQSAYDGKDYIALNEDLRSWTAADTAAQITQRKWEAAREAEQLRAYLEGKRVESCRRYLENGKETLQRTECPKTHMTHHPVSDHEATLRCWALAFYPAEITLTWQRDGEDQIQDTELVETRPAGDGTFQKWAAVVVPSGQEQRYTCHVQHEGLPEPLTLRWKPTSQPTIPIVGIVAGLAVLAVLAVLGAVVTAMMCRRKSSGGKGGSCSQAACSNSAQGSDESLIACKA.

The N-terminal stretch at 1–24 (MRVTAPRTLLLLLSGGLALTETWA) is a signal peptide. The segment at 25–114 (GSHSLRYFDT…LRGYYNQSED (90 aa)) is alpha-1. Topologically, residues 25-308 (GSHSLRYFDT…KPTSQPTIPI (284 aa)) are extracellular. Asn-110 carries an N-linked (GlcNAc...) asparagine glycan. The tract at residues 115–206 (GSHTLQWMYG…ENGKETLQRT (92 aa)) is alpha-2. Cystine bridges form between Cys-125-Cys-192 and Cys-227-Cys-283. An alpha-3 region spans residues 207-298 (ECPKTHMTHH…GLPEPLTLRW (92 aa)). The 89-residue stretch at 209–297 (PKTHMTHHPV…EGLPEPLTLR (89 aa)) folds into the Ig-like C1-type domain. The segment at 299–308 (KPTSQPTIPI) is connecting peptide. Residues 309–332 (VGIVAGLAVLAVLAVLGAVVTAMM) form a helical membrane-spanning segment. The Cytoplasmic portion of the chain corresponds to 333–366 (CRRKSSGGKGGSCSQAACSNSAQGSDESLIACKA). Phosphoserine is present on residues Ser-357 and Ser-360.

Belongs to the MHC class I family. In terms of assembly, heterodimer of an alpha chain and a beta chain (beta-2-microglobulin).

It localises to the membrane. In terms of biological role, involved in the presentation of foreign antigens to the immune system. The sequence is that of Patr class I histocompatibility antigen, C alpha chain from Pan troglodytes (Chimpanzee).